A 204-amino-acid polypeptide reads, in one-letter code: Protein GrpE (204 aa).

A compositionally biased stretch (basic and acidic residues) spans 1–12; it reads MSNEEQAQKDDA. Residues 1–32 form a disordered region; the sequence is MSNEEQAQKDDAQPVNEAAIDATAEQADAEVE. Positions 17–26 are enriched in low complexity; sequence EAAIDATAEQ.

Belongs to the GrpE family. As to quaternary structure, homodimer.

The protein localises to the cytoplasm. Participates actively in the response to hyperosmotic and heat shock by preventing the aggregation of stress-denatured proteins, in association with DnaK and GrpE. It is the nucleotide exchange factor for DnaK and may function as a thermosensor. Unfolded proteins bind initially to DnaJ; upon interaction with the DnaJ-bound protein, DnaK hydrolyzes its bound ATP, resulting in the formation of a stable complex. GrpE releases ADP from DnaK; ATP binding to DnaK triggers the release of the substrate protein, thus completing the reaction cycle. Several rounds of ATP-dependent interactions between DnaJ, DnaK and GrpE are required for fully efficient folding. The protein is Protein GrpE of Pseudoalteromonas atlantica (strain T6c / ATCC BAA-1087).